A 215-amino-acid polypeptide reads, in one-letter code: Pyrrolidone-carboxylate peptidase (215 aa).

Residues glutamate 80, cysteine 143, and histidine 167 contribute to the active site.

Belongs to the peptidase C15 family. As to quaternary structure, homotetramer.

It is found in the cytoplasm. The catalysed reaction is Release of an N-terminal pyroglutamyl group from a polypeptide, the second amino acid generally not being Pro.. In terms of biological role, removes 5-oxoproline from various penultimate amino acid residues except L-proline. The protein is Pyrrolidone-carboxylate peptidase of Bacillus cereus (strain ATCC 10987 / NRS 248).